Reading from the N-terminus, the 1227-residue chain is ATP-dependent helicase/nuclease subunit A (1227 aa).

A UvrD-like helicase ATP-binding domain is found at 3–477; sequence VKYTPDQARA…IIFAENFRSS (475 aa). Position 24–31 (24–31) interacts with ATP; it reads ASAGSGKT. The UvrD-like helicase C-terminal domain occupies 505 to 788; that stretch reads GQLKFAAGYD…KLMTIHASKG (284 aa).

It belongs to the helicase family. AddA subfamily. As to quaternary structure, heterodimer of AddA and AddB/RexB. Mg(2+) serves as cofactor.

It carries out the reaction Couples ATP hydrolysis with the unwinding of duplex DNA by translocating in the 3'-5' direction.. The catalysed reaction is ATP + H2O = ADP + phosphate + H(+). The heterodimer acts as both an ATP-dependent DNA helicase and an ATP-dependent, dual-direction single-stranded exonuclease. Recognizes the chi site generating a DNA molecule suitable for the initiation of homologous recombination. The AddA nuclease domain is required for chi fragment generation; this subunit has the helicase and 3' -&gt; 5' nuclease activities. This chain is ATP-dependent helicase/nuclease subunit A, found in Lactobacillus delbrueckii subsp. bulgaricus (strain ATCC 11842 / DSM 20081 / BCRC 10696 / JCM 1002 / NBRC 13953 / NCIMB 11778 / NCTC 12712 / WDCM 00102 / Lb 14).